We begin with the raw amino-acid sequence, 341 residues long: MIQDEVPVSAQTIQWRCIESKIESKRLHYGRFAISPFRKGQANTVGIAIRRSLLGEIEGTAITYAKSKNVIHEYSTIIGIEESINDILINFKEIVLRSDSYETQKAYISITGPKDITAEDILLPPSVQAIDDSQHIATITKDITLDIEIEIQKDRGYRIQDSKESQAGEFFIDAVFMPIRKANYSVHSFGNNKKFQEILFIEIWTDGSLTPKEALYEASRNLIDLFLPFLHTEEEEIISDRDEKSESNGNILLSNSISTDIDRMAKEVAFKHIFIDQLELPARAYNCLKKVDVHTISDLLKYSQDDLRKIKNFGKKSVDQVLEALQERFAINLPRNKFSID.

An alpha N-terminal domain (alpha-NTD) region spans residues 1–233 (MIQDEVPVSA…DLFLPFLHTE (233 aa)). The interval 262–341 (DRMAKEVAFK…NLPRNKFSID (80 aa)) is alpha C-terminal domain (alpha-CTD).

It belongs to the RNA polymerase alpha chain family. In terms of assembly, in plastids the minimal PEP RNA polymerase catalytic core is composed of four subunits: alpha, beta, beta', and beta''. When a (nuclear-encoded) sigma factor is associated with the core the holoenzyme is formed, which can initiate transcription.

It is found in the plastid. The protein localises to the chloroplast. The enzyme catalyses RNA(n) + a ribonucleoside 5'-triphosphate = RNA(n+1) + diphosphate. In terms of biological role, DNA-dependent RNA polymerase catalyzes the transcription of DNA into RNA using the four ribonucleoside triphosphates as substrates. The chain is DNA-directed RNA polymerase subunit alpha from Angiopteris evecta (Mule's foot fern).